Reading from the N-terminus, the 254-residue chain is Homeobox protein BarH-like 1 (254 aa).

A disordered region spans residues M1–D20. The segment at residues G142–V201 is a DNA-binding region (homeobox). Residues G204–D254 form a disordered region. Positions E230–D254 are enriched in basic and acidic residues.

Belongs to the BAR homeobox family. Widely expressed. Expressed at higher levels in testis and heart. Detected in craniofacial tissue and adult iris, but not in lymphocytes, fibroblasts, choroid retina, retinal pigment epithelium, kidney, or fetal liver.

It localises to the nucleus. Functionally, transcription factor, which is involved in craniofacial development, in odontogenesis and in stomach organogenesis. May have a role in the differentiation of molars from incisors. Plays a role in suppressing endodermal Wnt activity. Binds to a regulatory module of the NCAM promoter. This is Homeobox protein BarH-like 1 (BARX1) from Homo sapiens (Human).